Here is an 872-residue protein sequence, read N- to C-terminus: Sine oculis-binding protein homolog (872 aa).

Basic and acidic residues predominate over residues 1–14; sequence MAEMEKEGRPPENK. The tract at residues 1 to 26 is disordered; sequence MAEMEKEGRPPENKRSRKPAHPVKRE. 2 consecutive FCS-type zinc fingers follow at residues 142 to 180 and 216 to 256; these read DDVS…KCFA and FKNN…KCLN. 3 disordered regions span residues 308–354, 411–484, and 550–619; these read RRKA…KSMP, FIRG…PGAP, and KPPN…GRSE. Polar residues predominate over residues 319–344; the sequence is GQSQGPGPSASTTVSPSDTANCSVTK. The segment covering 417 to 433 has biased composition (low complexity); sequence HHASNPNSPLSNPMLPG. A compositionally biased stretch (pro residues) spans 460–484; the sequence is IHPPSTPTMPGNPPGLLPPPPPGAP. An SUMO interaction motif 1 (SIM); mediates the binding to polysumoylated substrates motif is present at residues 620–624; the sequence is VVDLT. Ser-629 bears the Phosphoserine mark. An SUMO interaction motif 2 (SIM); mediates the binding to polysumoylated substrates motif is present at residues 651–655; it reads VIDLT. A Glycyl lysine isopeptide (Lys-Gly) (interchain with G-Cter in SUMO2) cross-link involves residue Lys-675. Ser-697 is subject to Phosphoserine. The tract at residues 728-770 is disordered; it reads AAEGAKGAEPPPEQPPPPPPPPPAPPKKLLSPEEPAVSELESV. Over residues 736-753 the composition is skewed to pro residues; sequence EPPPEQPPPPPPPPPAPP.

Belongs to the SOBP family. As to quaternary structure, interacts (via SIM domains) with SUMO1 and SUMO2.

Its function is as follows. Implicated in development of the cochlea. The chain is Sine oculis-binding protein homolog from Bos taurus (Bovine).